The following is a 379-amino-acid chain: Cytochrome b (379 aa).

The next 4 helical transmembrane spans lie at 34 to 54, 78 to 99, 114 to 134, and 179 to 199; these read FGSLLGACLILQTITGIFLAM, WLIRNMHANGASLFFMCIYLHI, WNTGITLLLLTMATAFVGYVL, and FFTFHFLLPFTIMGMTMVHLL. Heme b contacts are provided by histidine 84 and histidine 98. The heme b site is built by histidine 183 and histidine 197. Histidine 202 contacts a ubiquinone. The next 4 helical transmembrane spans lie at 227–247, 289–309, 321–341, and 348–368; these read YKDLLGLILMLAFLLTLTLFY, LGGVLALLLSILVLFLMPTLH, LTQTLFWSFIANLMVLTWIGG, and FITIGQVASILHFLILLILMP.

Belongs to the cytochrome b family. The cytochrome bc1 complex contains 3 respiratory subunits (MT-CYB, CYC1 and UQCRFS1), 2 core proteins (UQCRC1 and UQCRC2) and probably 6 low-molecular weight proteins. Heme b serves as cofactor.

The protein resides in the mitochondrion inner membrane. In terms of biological role, component of the ubiquinol-cytochrome c reductase complex (complex III or cytochrome b-c1 complex) that is part of the mitochondrial respiratory chain. The b-c1 complex mediates electron transfer from ubiquinol to cytochrome c. Contributes to the generation of a proton gradient across the mitochondrial membrane that is then used for ATP synthesis. In Glyptemys muhlenbergii (Bog turtle), this protein is Cytochrome b (MT-CYB).